Here is a 441-residue protein sequence, read N- to C-terminus: Ribulose bisphosphate carboxylase large chain (441 aa).

N6,N6,N6-trimethyllysine is present on K5. N114 and T164 together coordinate substrate. The active-site Proton acceptor is the K166. K168 contacts substrate. 3 residues coordinate Mg(2+): K192, D194, and E195. K192 carries the post-translational modification N6-carboxylysine. The active-site Proton acceptor is the H285. 3 residues coordinate substrate: R286, H318, and S370.

This sequence belongs to the RuBisCO large chain family. Type I subfamily. In terms of assembly, heterohexadecamer of 8 large chains and 8 small chains; disulfide-linked. The disulfide link is formed within the large subunit homodimers. It depends on Mg(2+) as a cofactor. Post-translationally, the disulfide bond which can form in the large chain dimeric partners within the hexadecamer appears to be associated with oxidative stress and protein turnover.

Its subcellular location is the plastid. The protein resides in the chloroplast. It catalyses the reaction 2 (2R)-3-phosphoglycerate + 2 H(+) = D-ribulose 1,5-bisphosphate + CO2 + H2O. It carries out the reaction D-ribulose 1,5-bisphosphate + O2 = 2-phosphoglycolate + (2R)-3-phosphoglycerate + 2 H(+). Its function is as follows. RuBisCO catalyzes two reactions: the carboxylation of D-ribulose 1,5-bisphosphate, the primary event in carbon dioxide fixation, as well as the oxidative fragmentation of the pentose substrate in the photorespiration process. Both reactions occur simultaneously and in competition at the same active site. This chain is Ribulose bisphosphate carboxylase large chain, found in Begonia metallica x Begonia sanguinea.